We begin with the raw amino-acid sequence, 329 residues long: GTP 3',8-cyclase (329 aa).

The region spanning 8-234 is the Radical SAM core domain; it reads AFARKFYYLR…QLRQRSDGPA (227 aa). Arginine 17 is a GTP binding site. 2 residues coordinate [4Fe-4S] cluster: cysteine 24 and cysteine 28. S-adenosyl-L-methionine is bound at residue tyrosine 30. Position 31 (cysteine 31) interacts with [4Fe-4S] cluster. Arginine 68 is a binding site for GTP. An S-adenosyl-L-methionine-binding site is contributed by glycine 72. Threonine 99 is a binding site for GTP. Serine 123 provides a ligand contact to S-adenosyl-L-methionine. Lysine 160 serves as a coordination point for GTP. Methionine 194 is an S-adenosyl-L-methionine binding site. Residues cysteine 257 and cysteine 260 each contribute to the [4Fe-4S] cluster site. 262 to 264 serves as a coordination point for GTP; sequence RLR. Cysteine 274 contributes to the [4Fe-4S] cluster binding site.

This sequence belongs to the radical SAM superfamily. MoaA family. Monomer and homodimer. Requires [4Fe-4S] cluster as cofactor.

The catalysed reaction is GTP + AH2 + S-adenosyl-L-methionine = (8S)-3',8-cyclo-7,8-dihydroguanosine 5'-triphosphate + 5'-deoxyadenosine + L-methionine + A + H(+). The protein operates within cofactor biosynthesis; molybdopterin biosynthesis. Its function is as follows. Catalyzes the cyclization of GTP to (8S)-3',8-cyclo-7,8-dihydroguanosine 5'-triphosphate. The polypeptide is GTP 3',8-cyclase (Salmonella dublin (strain CT_02021853)).